Consider the following 193-residue polypeptide: Regulator of free ubiquitin chains 1 (193 aa).

This sequence belongs to the RFU1 family.

The protein resides in the endosome. Its function is as follows. Inhibitor of the DOA4 deubiquitinase involved in the regulation of protein degradation by the proteasome and maintenance of a normal level of free ubiquitin. This chain is Regulator of free ubiquitin chains 1 (RFU1), found in Eremothecium gossypii (strain ATCC 10895 / CBS 109.51 / FGSC 9923 / NRRL Y-1056) (Yeast).